Here is a 240-residue protein sequence, read N- to C-terminus: Zinc import ATP-binding protein ZnuC (240 aa).

Positions 1–219 constitute an ABC transporter domain; sequence MSLLSIAALD…PAYRAMFGLD (219 aa). 36–43 contributes to the ATP binding site; that stretch reads GPNGSGKT.

This sequence belongs to the ABC transporter superfamily. Zinc importer (TC 3.A.1.15.5) family. The complex is composed of two ATP-binding proteins (ZnuC), two transmembrane proteins (ZnuB) and a solute-binding protein (ZnuA).

Its subcellular location is the cell inner membrane. The enzyme catalyses Zn(2+)(out) + ATP(in) + H2O(in) = Zn(2+)(in) + ADP(in) + phosphate(in) + H(+)(in). Functionally, part of the ABC transporter complex ZnuABC involved in zinc import. Responsible for energy coupling to the transport system. The polypeptide is Zinc import ATP-binding protein ZnuC (Chromohalobacter salexigens (strain ATCC BAA-138 / DSM 3043 / CIP 106854 / NCIMB 13768 / 1H11)).